Consider the following 367-residue polypeptide: Peptide chain release factor 2 (367 aa).

Glutamine 254 bears the N5-methylglutamine mark.

This sequence belongs to the prokaryotic/mitochondrial release factor family. In terms of processing, methylated by PrmC. Methylation increases the termination efficiency of RF2.

It localises to the cytoplasm. Functionally, peptide chain release factor 2 directs the termination of translation in response to the peptide chain termination codons UGA and UAA. In Neisseria meningitidis serogroup B (strain ATCC BAA-335 / MC58), this protein is Peptide chain release factor 2.